Here is a 129-residue protein sequence, read N- to C-terminus: Protein RALF-like 34 (129 aa).

Positions Met-1–Ser-23 are cleaved as a signal peptide. Residues Glu-24–Arg-76 constitute a propeptide, removed in mature form. Intrachain disulfides connect Cys-94–Cys-107 and Cys-121–Cys-127.

Belongs to the plant rapid alkalinization factor (RALF) family. In terms of processing, proteolytically cleaved, probably by S1P, a subtilisin-like serine protease (subtilase). As to expression, expressed in roots, stems and leaves.

It localises to the secreted. Cell signaling peptide that may regulate plant stress, growth, and development. Mediates a rapid alkalinization of extracellular space by mediating a transient increase in the cytoplasmic Ca(2+) concentration leading to a calcium-dependent signaling events through a cell surface receptor and a concomitant activation of some intracellular mitogen-activated protein kinases. The chain is Protein RALF-like 34 (RALFL34) from Arabidopsis thaliana (Mouse-ear cress).